A 778-amino-acid polypeptide reads, in one-letter code: Tubulin polyglutamylase ttll6 (778 aa).

A disordered region spans residues 1-43; the sequence is MGTPAERSVSEVCRCEPDPGLEGEGWGSDTHAEPSNTPIPLPV. Residues 51 to 393 form the TTL domain; that stretch reads KKKLWINLTN…LGACDRRKIT (343 aa). ATP contacts are provided by residues lysine 168, 174–175, 196–199, and 209–211; these read QG, QVYM, and KFD. Position 174 (glutamine 174) interacts with a protein. Arginine 235 contacts L-glutamate. ATP is bound at residue 257–258; the sequence is TN. The L-glutamate site is built by tyrosine 259 and lysine 277. The Mg(2+) site is built by aspartate 340, glutamate 353, and asparagine 355. Histidine 356 contributes to the a protein binding site. The tract at residues 365 to 445 is c-MTBD region; the sequence is RLDREVKDSL…MGGFRRIFPR (81 aa). Lysine 371 contributes to the L-glutamate binding site. 4 stretches are compositionally biased toward basic and acidic residues: residues 402–418, 485–510, 533–542, and 760–778; these read ERLQ…EEPR, KQEQ…GEKV, SVREETPVSL, and LSHD…EHSL. Disordered stretches follow at residues 402-422, 485-542, and 758-778; these read ERLQ…QSQA, KQEQ…PVSL, and PHLS…EHSL.

This sequence belongs to the tubulin--tyrosine ligase family. Mg(2+) is required as a cofactor.

It is found in the cytoplasm. It localises to the cytoskeleton. The protein resides in the cilium axoneme. Its subcellular location is the cilium basal body. The catalysed reaction is L-glutamyl-[protein] + L-glutamate + ATP = gamma-L-glutamyl-L-glutamyl-[protein] + ADP + phosphate + H(+). It carries out the reaction (L-glutamyl)(n)-gamma-L-glutamyl-L-glutamyl-[protein] + L-glutamate + ATP = (L-glutamyl)(n+1)-gamma-L-glutamyl-L-glutamyl-[protein] + ADP + phosphate + H(+). Functionally, polyglutamylase which modifies both tubulin and non-tubulin proteins, generating alpha-linked polyglutamate side chains on the gamma-carboxyl group of specific glutamate residues of target proteins. Preferentially mediates ATP-dependent long polyglutamate chain elongation over the initiation step of the polyglutamylation reaction. Preferentially modifies the alpha-tubulin tail over a beta-tail. Mediates microtubule polyglutamylation in cilia axoneme, which is important for ciliary structural formation and motility. Polyglutamylates olfactory cilia, necessary for the regulation of ciliary structure and beating. The polypeptide is Tubulin polyglutamylase ttll6 (Danio rerio (Zebrafish)).